A 500-amino-acid chain; its full sequence is Polyamine oxidase 1 (500 aa).

Residues methionine 1–alanine 28 form the signal peptide. FAD contacts are provided by residues methionine 42–serine 43, glutamate 63, arginine 71, and asparagine 87–tryptophan 88. Residue glutamate 90 coordinates substrate. Asparagine 105 is a glycosylation site (N-linked (GlcNAc...) asparagine). Residue glutamate 198 coordinates substrate. 3 residues coordinate FAD: valine 265, tyrosine 427, and glutamate 458. A substrate-binding site is contributed by glycine 466. FAD is bound at residue tyrosine 467–valine 468. Cysteine 485 and cysteine 491 are disulfide-bonded.

It belongs to the flavin monoamine oxidase family. Monomer. Requires FAD as cofactor.

The protein localises to the secreted. It localises to the extracellular space. It is found in the apoplast. The protein resides in the cell wall. It catalyses the reaction spermidine + O2 + H2O = 4-aminobutanal + propane-1,3-diamine + H2O2. It carries out the reaction N(8)-acetylspermidine + O2 + H2O = 4-acetamidobutanal + propane-1,3-diamine + H2O2. The enzyme catalyses spermine + O2 + H2O = N-(3-aminopropyl)-4-aminobutanal + propane-1,3-diamine + H2O2. The catalysed reaction is N(1)-acetylspermine + O2 + H2O = N-(3-acetamidopropyl)-4-aminobutanal + propane-1,3-diamine + H2O2. The protein operates within amine and polyamine degradation; spermine degradation. Flavoenzyme involved in polyamine back-conversion. Catalyzes the oxidation of the secondary amino group of polyamines, such as spermine, spermidine and their acetyl derivatives. Plays an important role in the regulation of polyamine intracellular concentration. In Zea mays (Maize), this protein is Polyamine oxidase 1.